We begin with the raw amino-acid sequence, 477 residues long: UDP-N-acetylmuramoylalanine--D-glutamate ligase (477 aa).

125–131 contacts ATP; the sequence is GTNGKST.

The protein belongs to the MurCDEF family.

It localises to the cytoplasm. The catalysed reaction is UDP-N-acetyl-alpha-D-muramoyl-L-alanine + D-glutamate + ATP = UDP-N-acetyl-alpha-D-muramoyl-L-alanyl-D-glutamate + ADP + phosphate + H(+). It participates in cell wall biogenesis; peptidoglycan biosynthesis. Functionally, cell wall formation. Catalyzes the addition of glutamate to the nucleotide precursor UDP-N-acetylmuramoyl-L-alanine (UMA). This chain is UDP-N-acetylmuramoylalanine--D-glutamate ligase, found in Rhodospirillum rubrum (strain ATCC 11170 / ATH 1.1.1 / DSM 467 / LMG 4362 / NCIMB 8255 / S1).